The sequence spans 448 residues: Probable D-serine dehydratase (448 aa).

Lys117 carries the post-translational modification N6-(pyridoxal phosphate)lysine.

Belongs to the serine/threonine dehydratase family. DsdA subfamily. Pyridoxal 5'-phosphate is required as a cofactor.

The catalysed reaction is D-serine = pyruvate + NH4(+). This chain is Probable D-serine dehydratase (dsdA), found in Bacillus subtilis (strain 168).